The primary structure comprises 91 residues: uncharacterized protein (91 aa).

The disordered stretch occupies residues 71–91; the sequence is EANDRPSKKCGSGNLRVEKLV.

This is an uncharacterized protein from Archaeoglobus fulgidus (strain ATCC 49558 / DSM 4304 / JCM 9628 / NBRC 100126 / VC-16).